The following is a 220-amino-acid chain: Ribosomal RNA small subunit methyltransferase G (220 aa).

S-adenosyl-L-methionine contacts are provided by residues glycine 82, leucine 87, valine 137–glutamate 138, and arginine 152.

Belongs to the methyltransferase superfamily. RNA methyltransferase RsmG family.

The protein resides in the cytoplasm. The enzyme catalyses guanosine(527) in 16S rRNA + S-adenosyl-L-methionine = N(7)-methylguanosine(527) in 16S rRNA + S-adenosyl-L-homocysteine. In terms of biological role, specifically methylates the N7 position of guanine in position 527 of 16S rRNA. The chain is Ribosomal RNA small subunit methyltransferase G from Janthinobacterium sp. (strain Marseille) (Minibacterium massiliensis).